The chain runs to 600 residues: NADH-quinone oxidoreductase subunit C/D (600 aa).

Residues 1 to 190 form an NADH dehydrogenase I subunit C region; it reads MVNNMTDLTA…DPFELTKAKQ (190 aa). The interval 214-600 is NADH dehydrogenase I subunit D; it reads DFMFLNLGPN…IDFVMSDVDR (387 aa).

This sequence in the N-terminal section; belongs to the complex I 30 kDa subunit family. It in the C-terminal section; belongs to the complex I 49 kDa subunit family. As to quaternary structure, NDH-1 is composed of 13 different subunits. Subunits NuoB, CD, E, F, and G constitute the peripheral sector of the complex.

The protein localises to the cell inner membrane. The catalysed reaction is a quinone + NADH + 5 H(+)(in) = a quinol + NAD(+) + 4 H(+)(out). In terms of biological role, NDH-1 shuttles electrons from NADH, via FMN and iron-sulfur (Fe-S) centers, to quinones in the respiratory chain. The immediate electron acceptor for the enzyme in this species is believed to be ubiquinone. Couples the redox reaction to proton translocation (for every two electrons transferred, four hydrogen ions are translocated across the cytoplasmic membrane), and thus conserves the redox energy in a proton gradient. The sequence is that of NADH-quinone oxidoreductase subunit C/D from Salmonella paratyphi A (strain ATCC 9150 / SARB42).